The chain runs to 152 residues: Nucleoside diphosphate kinase (152 aa).

Residues K11, F59, R87, T93, R104, and N114 each coordinate ATP. H117 functions as the Pros-phosphohistidine intermediate in the catalytic mechanism.

This sequence belongs to the NDK family. As to quaternary structure, homotetramer. Mg(2+) is required as a cofactor.

The protein resides in the cytoplasm. It carries out the reaction a 2'-deoxyribonucleoside 5'-diphosphate + ATP = a 2'-deoxyribonucleoside 5'-triphosphate + ADP. It catalyses the reaction a ribonucleoside 5'-diphosphate + ATP = a ribonucleoside 5'-triphosphate + ADP. Major role in the synthesis of nucleoside triphosphates other than ATP. The ATP gamma phosphate is transferred to the NDP beta phosphate via a ping-pong mechanism, using a phosphorylated active-site intermediate. This chain is Nucleoside diphosphate kinase, found in Prochlorococcus marinus (strain MIT 9301).